The following is a 189-amino-acid chain: Protein GrpE (189 aa).

The span at 1-14 shows a compositional bias: basic and acidic residues; it reads MTEKNEEVVEDKNI. The tract at residues 1-38 is disordered; it reads MTEKNEEVVEDKNISDQTDENLTEEIESEADDLQVEPD. Acidic residues predominate over residues 17-35; that stretch reads QTDENLTEEIESEADDLQV.

It belongs to the GrpE family. Homodimer.

It is found in the cytoplasm. Participates actively in the response to hyperosmotic and heat shock by preventing the aggregation of stress-denatured proteins, in association with DnaK and GrpE. It is the nucleotide exchange factor for DnaK and may function as a thermosensor. Unfolded proteins bind initially to DnaJ; upon interaction with the DnaJ-bound protein, DnaK hydrolyzes its bound ATP, resulting in the formation of a stable complex. GrpE releases ADP from DnaK; ATP binding to DnaK triggers the release of the substrate protein, thus completing the reaction cycle. Several rounds of ATP-dependent interactions between DnaJ, DnaK and GrpE are required for fully efficient folding. The polypeptide is Protein GrpE (Leuconostoc mesenteroides subsp. mesenteroides (strain ATCC 8293 / DSM 20343 / BCRC 11652 / CCM 1803 / JCM 6124 / NCDO 523 / NBRC 100496 / NCIMB 8023 / NCTC 12954 / NRRL B-1118 / 37Y)).